The sequence spans 134 residues: Galectin-1 (134 aa).

Alanine 1 bears the N-acetylalanine mark. Residues 4 to 134 (GVAVTNLNLK…GLAFKSITTE (131 aa)) form the Galectin domain. A beta-D-galactoside is bound by residues 45–49 (HFNAR), histidine 53, asparagine 62, and 69–72 (WGSE).

As to quaternary structure, homodimer.

The protein localises to the secreted. Its subcellular location is the extracellular space. The protein resides in the extracellular matrix. In terms of biological role, may regulate cell apoptosis and cell differentiation. Binds beta-galactoside and a wide array of complex carbohydrates. The polypeptide is Galectin-1 (Rhinella arenarum (Argentine common toad)).